The following is a 486-amino-acid chain: MTTVYTLVSWLAILGYWLLIAGVTLRILMKRRAVPSAMAWLLIIYILPLVGIIAYLAVGELHLGKRRAERARAMWPSTAKWLNDLKACKHIFAEENSSVAAPLFKLCERRQGIAGVKGNQLQLMTESDDVMQALIRDIQLARHNIEMVFYIWQPGGMADQVAESLMAAARRGIHCRLMLDSAGSVAFFRSPWPELMRNAGIEVVEALKVNLMRVFLRRMDLRQHRKMIMIDNYIAYTGSMNMVDPRYFKQDAGVGQWIDLMARMEGPIATAMGIIYSCDWEIETGKRILPPPPDVNIMPFEQASGHTIHTIASGPGFPEDLIHQALLTAAYSAHEYLIMTTPYFVPSDDLLHAICTAAQRGVDVSIILPRKNDSMLVGWASRAFFTELLAAGVKIYQFEGGLLHTKSVLVDGELSLVGTVNLDMRSLWLNFEITLAIDDKGFGADLAAVQDDYISRSRLLDARLWLKRPLWQRVAERLFYFFSPLL.

2 helical membrane passes run 3-23 (TVYT…IAGV) and 38-58 (MAWL…YLAV). 2 PLD phosphodiesterase domains span residues 219–246 (MDLR…VDPR) and 399–426 (EGGL…DMRS). Residues His224, Lys226, Asp231, His404, Lys406, and Asp411 contribute to the active site.

It belongs to the phospholipase D family. Cardiolipin synthase subfamily. ClsA sub-subfamily.

The protein resides in the cell inner membrane. It catalyses the reaction 2 a 1,2-diacyl-sn-glycero-3-phospho-(1'-sn-glycerol) = a cardiolipin + glycerol. Functionally, catalyzes the reversible phosphatidyl group transfer from one phosphatidylglycerol molecule to another to form cardiolipin (CL) (diphosphatidylglycerol) and glycerol. In Shigella flexneri, this protein is Cardiolipin synthase A.